The sequence spans 276 residues: Homeobox-leucine zipper protein HOX11 (276 aa).

The segment at 1–92 (MVDGHLEAST…DDGGSARKKL (92 aa)) is disordered. Over residues 39–48 (LSSSPNNSAG) the composition is skewed to polar residues. Residues 58 to 73 (HGLGGNDAAPGGGGGD) are compositionally biased toward gly residues. Residues 87–146 (SARKKLRLSKEQSAFLEESFKEHSTLNPKQKLALAKQLNLRPRQVEVWFQNRRARTKLKQ) constitute a DNA-binding region (homeobox). Positions 145 to 189 (KQTEVDCEYLKRCCETLTEENRRLQKELAELRALKTVHPFYMHLP) are leucine-zipper. The tract at residues 214-244 (AATSSTAAPPAAPSSGGIAATSSSSAAAAAA) is disordered.

This sequence belongs to the HD-ZIP homeobox family. Class II subfamily. As to expression, expressed in stems, leaf sheaths and blades and panicles.

It is found in the nucleus. Functionally, probable transcription factor. This is Homeobox-leucine zipper protein HOX11 (HOX11) from Oryza sativa subsp. indica (Rice).